We begin with the raw amino-acid sequence, 124 residues long: Small ribosomal subunit protein uS12 (124 aa).

The residue at position 90 (Asp90) is a 3-methylthioaspartic acid.

The protein belongs to the universal ribosomal protein uS12 family. Part of the 30S ribosomal subunit. Contacts proteins S8 and S17. May interact with IF1 in the 30S initiation complex.

In terms of biological role, with S4 and S5 plays an important role in translational accuracy. Functionally, interacts with and stabilizes bases of the 16S rRNA that are involved in tRNA selection in the A site and with the mRNA backbone. Located at the interface of the 30S and 50S subunits, it traverses the body of the 30S subunit contacting proteins on the other side and probably holding the rRNA structure together. The combined cluster of proteins S8, S12 and S17 appears to hold together the shoulder and platform of the 30S subunit. In Wolbachia sp. subsp. Brugia malayi (strain TRS), this protein is Small ribosomal subunit protein uS12.